The chain runs to 175 residues: Large ribosomal subunit protein uL6 (175 aa).

The protein belongs to the universal ribosomal protein uL6 family. In terms of assembly, part of the 50S ribosomal subunit.

Functionally, this protein binds to the 23S rRNA, and is important in its secondary structure. It is located near the subunit interface in the base of the L7/L12 stalk, and near the tRNA binding site of the peptidyltransferase center. This is Large ribosomal subunit protein uL6 from Xylella fastidiosa (strain M23).